The sequence spans 345 residues: GTP 3',8-cyclase (345 aa).

Residues 10–236 form the Radical SAM core domain; it reads SHGRPLGVLR…QCVSSHWPLD (227 aa). Arg-19 is a binding site for GTP. [4Fe-4S] cluster is bound by residues Cys-26 and Cys-30. Tyr-32 contacts S-adenosyl-L-methionine. Cys-33 contributes to the [4Fe-4S] cluster binding site. Arg-65 lines the GTP pocket. S-adenosyl-L-methionine is bound at residue Gly-69. Thr-98 contributes to the GTP binding site. An S-adenosyl-L-methionine-binding site is contributed by Ser-123. Lys-172 contacts GTP. Residue Met-206 participates in S-adenosyl-L-methionine binding. 2 residues coordinate [4Fe-4S] cluster: Cys-269 and Cys-272. A GTP-binding site is contributed by 274 to 276; it reads RIR. Cys-286 provides a ligand contact to [4Fe-4S] cluster.

Belongs to the radical SAM superfamily. MoaA family. As to quaternary structure, monomer and homodimer. Requires [4Fe-4S] cluster as cofactor.

The catalysed reaction is GTP + AH2 + S-adenosyl-L-methionine = (8S)-3',8-cyclo-7,8-dihydroguanosine 5'-triphosphate + 5'-deoxyadenosine + L-methionine + A + H(+). It participates in cofactor biosynthesis; molybdopterin biosynthesis. Its function is as follows. Catalyzes the cyclization of GTP to (8S)-3',8-cyclo-7,8-dihydroguanosine 5'-triphosphate. In Synechococcus sp. (strain CC9902), this protein is GTP 3',8-cyclase.